Consider the following 112-residue polypeptide: 2Fe-2S ferredoxin (112 aa).

A 2Fe-2S ferredoxin-type domain is found at 5–107; that stretch reads IKVTFIINDG…GIKVHLPAAT (103 aa). [2Fe-2S] cluster contacts are provided by C42, C48, C51, and C88.

Belongs to the adrenodoxin/putidaredoxin family. Requires [2Fe-2S] cluster as cofactor.

In terms of biological role, ferredoxin are iron-sulfur proteins that transfer electrons in a wide variety of metabolic reactions. In Rickettsia rickettsii, this protein is 2Fe-2S ferredoxin (fdxB).